A 398-amino-acid polypeptide reads, in one-letter code: Putative FBD-associated F-box protein At5g56700 (398 aa).

Residues 1 to 47 (MAKISDLSDELLVKILSFLPTKEAVSTSCLSKQWEFLWMWLSKLEFY) form the F-box domain. An FBD domain is found at 340-388 (WKNNKSSVPKCLLESLETFEFAGYIGTPEERDFLSYIFKHARCLKSSSI).

The protein is Putative FBD-associated F-box protein At5g56700 of Arabidopsis thaliana (Mouse-ear cress).